A 3085-amino-acid polypeptide reads, in one-letter code: Genome polyprotein (3085 aa).

The Peptidase S30 domain occupies 170–313; that stretch reads LVAKSDFDDL…AGDVGRTMHY (144 aa). Active-site for P1 proteinase activity residues include His224, Glu233, and Ser266. An Involved in interaction with stylet and aphid transmission motif is present at residues 365 to 368; sequence KMAC. The Involved in virions binding and aphid transmission motif lies at 622 to 624; the sequence is PTK. Residues 648 to 770 form the Peptidase C6 domain; the sequence is MYIAKEGYCY…EGEMKWYRVG (123 aa). Active-site for helper component proteinase activity residues include Cys656 and His729. Residues 1241 to 1393 form the Helicase ATP-binding domain; it reads TICASSEQEF…TQHDVLIKIE (153 aa). 1254 to 1261 provides a ligand contact to ATP; that stretch reads GAVGSGKS. The short motif at 1343-1346 is the DESH box element; the sequence is DESH. The Helicase C-terminal domain maps to 1412–1571; it reads DVVQNGDNIL…NLPVMTHNVT (160 aa). The Nuclear localization signal motif lies at 1895–1904; sequence ERGKRKGNNS. Tyr1919 carries the post-translational modification O-(5'-phospho-RNA)-tyrosine. In terms of domain architecture, Peptidase C4 spans 2047-2266; it reads GKSIVKGLRN…VAWNGMTLRE (220 aa). Active-site for nuclear inclusion protein A activity residues include His2092, Asp2127, and Cys2198. A RdRp catalytic domain is found at 2535-2659; sequence WIYCDADGSQ…AIYPSKEKFL (125 aa). The tract at residues 2801–2869 is disordered; it reads DGPDIVTYQG…STAVPRLKQI (69 aa). Residues 2816–2831 show a composition bias toward low complexity; it reads KSSQPQSSSPQVPQQV. The span at 2839–2855 shows a compositional bias: basic and acidic residues; the sequence is GRDKQSVIKHDSTKSKD. Residue Thr3068 is modified to Phosphothreonine.

It belongs to the potyviridae genome polyprotein family. As to quaternary structure, interacts with host eIF4E protein (via cap-binding region); this interaction mediates the translation of the VPg-viral RNA conjugates. Part of a complex that comprises VPg, RNA, host EIF4E and EIF4G; this interaction mediates the translation of the VPg-viral RNA conjugates. VPg is uridylylated by the polymerase and is covalently attached to the 5'-end of the genomic RNA. This uridylylated form acts as a nucleotide-peptide primer for the polymerase. Post-translationally, potyviral RNA is expressed as two polyproteins which undergo post-translational proteolytic processing. Genome polyprotein is processed by NIa-pro, P1 and HC-pro proteinases resulting in the production of at least ten individual proteins. P3N-PIPO polyprotein is cleaved by P1 and HC-pro proteinases resulting in the production of three individual proteins. The P1 proteinase and the HC-pro cleave only their respective C-termini autocatalytically. 6K1 is essential for proper proteolytic separation of P3 from CI.

The protein localises to the host cytoplasmic vesicle. It localises to the host nucleus. The protein resides in the virion. It carries out the reaction RNA(n) + a ribonucleoside 5'-triphosphate = RNA(n+1) + diphosphate. The enzyme catalyses Hydrolyzes glutaminyl bonds, and activity is further restricted by preferences for the amino acids in P6 - P1' that vary with the species of potyvirus, e.g. Glu-Xaa-Xaa-Tyr-Xaa-Gln-|-(Ser or Gly) for the enzyme from tobacco etch virus. The natural substrate is the viral polyprotein, but other proteins and oligopeptides containing the appropriate consensus sequence are also cleaved.. The catalysed reaction is Hydrolyzes a Gly-|-Gly bond at its own C-terminus, commonly in the sequence -Tyr-Xaa-Val-Gly-|-Gly, in the processing of the potyviral polyprotein.. Its function is as follows. Required for aphid transmission and also has proteolytic activity. Only cleaves a Gly-Gly dipeptide at its own C-terminus. Interacts with virions and aphid stylets. Acts as a suppressor of RNA-mediated gene silencing, also known as post-transcriptional gene silencing (PTGS), a mechanism of plant viral defense that limits the accumulation of viral RNAs. May have RNA-binding activity. Has helicase activity. It may be involved in replication. In terms of biological role, indispensable for virus replication. Reduces the abundance of host transcripts related to jasmonic acid biosynthesis therefore altering the host defenses. In order to increase its own stability, decreases host protein degradation pathways. Functionally, indispensable for virus replication. Its function is as follows. Mediates the cap-independent, EIF4E-dependent translation of viral genomic RNAs. Binds to the cap-binding site of host EIF4E and thus interferes with the host EIF4E-dependent mRNA export and translation. VPg-RNA directly binds EIF4E and is a template for transcription. Also forms trimeric complexes with EIF4E-EIF4G, which are templates for translation. Has RNA-binding and proteolytic activities. In terms of biological role, an RNA-dependent RNA polymerase that plays an essential role in the virus replication. Functionally, involved in aphid transmission, cell-to-cell and systemis movement, encapsidation of the viral RNA and in the regulation of viral RNA amplification. The protein is Genome polyprotein of Beet mosaic virus (BtMV).